The sequence spans 222 residues: MAVGDVKTAQGLNDLNQYLAEKSYVSGYTPSQADVQVFEQVGKAPAANLPHVLRWYNQIASYTSAERKTWSQGTSPLTAGAKPTAPAPAAKDDDDDDVDLFGSGDEEEDAEAERIREERLKAYADKKSKKPALIAKSSILLDVKPWDDETDMKEMENQVRTIEMEGLLWGASKLVPVGYGINKLQIMCVIEDDKVSVDLLTEKIQEFEDFVQSVDIAAFNKI.

Residues S71 to E113 are disordered. Residues T78–A89 show a composition bias toward low complexity. Over residues D92–E111 the composition is skewed to acidic residues.

This sequence belongs to the EF-1-beta/EF-1-delta family. In terms of assembly, EF-1 is composed of 4 subunits: alpha, beta, beta' and gamma. Phosphorylated.

Its function is as follows. EF-1-beta and EF-1-beta' stimulate the exchange of GDP bound to EF-1-alpha to GTP. The polypeptide is Elongation factor 1-beta' (Bombyx mori (Silk moth)).